The primary structure comprises 42 residues: Delta-hexatoxin-Iw1a (42 aa).

Disulfide bonds link C1–C15, C8–C20, C14–C31, and C16–C42.

The protein belongs to the neurotoxin 06 (delta-actx) family. In terms of tissue distribution, expressed by the venom gland.

Its subcellular location is the secreted. Inhibits tetrodotoxin-sensitive sodium channels by binding to site 3. It slows the inactivation, causes a prolongation of action potential duration resulting in repetitive firing in autonomic and motor nerve fibers. Does not depolarize the resting potential. Does not affect tetrodotoxin-resistant sodium channels. This lethal neurotoxin is active on both insect and mammalian voltage-gated sodium channels (Nav). The sequence is that of Delta-hexatoxin-Iw1a from Illawarra wisharti (Illawarra funnel-web spider).